The primary structure comprises 326 residues: Thioredoxin reductase (326 aa).

Residue 55–62 (EGPEPGGQ) coordinates FAD. C156 and C159 are joined by a disulfide. Residue 298 to 307 (DVSNKLYAQA) coordinates FAD.

Belongs to the class-II pyridine nucleotide-disulfide oxidoreductase family. In terms of assembly, homodimer. It depends on FAD as a cofactor.

It localises to the cytoplasm. It catalyses the reaction [thioredoxin]-dithiol + NADP(+) = [thioredoxin]-disulfide + NADPH + H(+). The chain is Thioredoxin reductase (trxB) from Borreliella burgdorferi (strain ATCC 35210 / DSM 4680 / CIP 102532 / B31) (Borrelia burgdorferi).